Consider the following 342-residue polypeptide: Phosphatidate cytidylyltransferase, mitochondrial (342 aa).

Belongs to the TAM41 family. Mg(2+) serves as cofactor. It depends on Co(2+) as a cofactor. The cofactor is Cu(2+).

It localises to the mitochondrion inner membrane. The catalysed reaction is a 1,2-diacyl-sn-glycero-3-phosphate + CTP + H(+) = a CDP-1,2-diacyl-sn-glycerol + diphosphate. It participates in phospholipid metabolism; CDP-diacylglycerol biosynthesis; CDP-diacylglycerol from sn-glycerol 3-phosphate: step 3/3. In terms of biological role, catalyzes the formation of CDP-diacylglycerol (CDP-DAG) from phosphatidic acid (PA) in the mitochondrial inner membrane. Required for the biosynthesis of the dimeric phospholipid cardiolipin, which stabilizes supercomplexes of the mitochondrial respiratory chain in the mitochondrial inner membrane. In Drosophila melanogaster (Fruit fly), this protein is Phosphatidate cytidylyltransferase, mitochondrial.